The following is a 255-amino-acid chain: Small ribosomal subunit protein uS2 (255 aa).

This sequence belongs to the universal ribosomal protein uS2 family.

In Streptococcus thermophilus (strain ATCC BAA-491 / LMD-9), this protein is Small ribosomal subunit protein uS2.